Reading from the N-terminus, the 108-residue chain is uncharacterized protein (108 aa).

Over residues 1–10 (MSGISLTPVK) the composition is skewed to polar residues. 2 disordered regions span residues 1–63 (MSGI…RPPR) and 83–108 (VLSP…PRTQ). The segment covering 33–62 (YVDRARPSADAKEHCAASDPEEWHSGDRPP) has biased composition (basic and acidic residues).

This is an uncharacterized protein from Gallid herpesvirus 2 (strain Chicken/Md5/ATCC VR-987) (GaHV-2).